Reading from the N-terminus, the 151-residue chain is Receptor activity-modifying protein 3 (151 aa).

The N-terminal stretch at 1-30 is a signal peptide; sequence MEATAPRRRHLLPLLLLLLLLCGECPPVSG. Residues 31 to 116 are Extracellular-facing; sequence CNEKRMLAML…CSVDRQQWQD (86 aa). Disulfide bonds link C43/C75 and C60/C107. 2 N-linked (GlcNAc...) asparagine glycosylation sites follow: N61 and N106. A helical transmembrane segment spans residues 117–141; that stretch reads PPDEILIPLIVVPILLTLAMTGLVV. Over 142–151 the chain is Cytoplasmic; that stretch reads WRSKRAAQVV.

This sequence belongs to the RAMP family. Heterodimer of CALCRL and RAMP3; interaction induces allosteric modulation of CALCRL function and ligand specificity for adrenomedullin/ADM and intermedin/ADM2. Heterodimer of CALCR and RAMP3; interaction form the receptor complex AMYR3 for amylin/IAPP. Interacts with GPER1.

The protein localises to the cell membrane. Its subcellular location is the membrane. Accessory protein that interacts with and modulates the function of G-protein coupled receptors including calcitonin gene-related peptide type 1 receptor (CALCRL), calcitonin receptor (CALCR) and G-protein coupled estrogen receptor 1 (GPER1). Required for the transport of CALCRL and GPER1 receptors to the plasma membrane. Plays a role in cardioprotection by reducing cardiac hypertrophy and perivascular fibrosis in a GPER1-dependent manner. Together with CALCRL, form a receptor complex for adrenomedullin/ADM and intermedin/ADM2. Together with CALCR, act as a receptor complex for amylin/IAPP. The protein is Receptor activity-modifying protein 3 (RAMP3) of Sus scrofa (Pig).